A 593-amino-acid polypeptide reads, in one-letter code: Genetic interactor of prohibitins 3, mitochondrial (593 aa).

The N-terminal 61 residues, 1–61 (MLGRIRPFVR…NPSKPGFYRP (61 aa)), are a transit peptide targeting the mitochondrion. In terms of domain architecture, CP-type G spans 142–349 (VESIDKIMST…IVDVPGFSAN (208 aa)).

It belongs to the TRAFAC class YlqF/YawG GTPase family. GEP3 subfamily.

The protein localises to the mitochondrion. Functionally, may be involved in the mitochondrial lipid metabolism. The polypeptide is Genetic interactor of prohibitins 3, mitochondrial (GEP3) (Debaryomyces hansenii (strain ATCC 36239 / CBS 767 / BCRC 21394 / JCM 1990 / NBRC 0083 / IGC 2968) (Yeast)).